A 127-amino-acid polypeptide reads, in one-letter code: Glycine cleavage system H protein (127 aa).

Residues 24–105 (TLTIGITDLA…AYDAWLFKIK (82 aa)) form the Lipoyl-binding domain. Residue Lys-65 is modified to N6-lipoyllysine.

This sequence belongs to the GcvH family. The glycine cleavage system is composed of four proteins: P, T, L and H. The cofactor is (R)-lipoate.

Functionally, the glycine cleavage system catalyzes the degradation of glycine. The H protein shuttles the methylamine group of glycine from the P protein to the T protein. This Ralstonia nicotianae (strain ATCC BAA-1114 / GMI1000) (Ralstonia solanacearum) protein is Glycine cleavage system H protein.